We begin with the raw amino-acid sequence, 345 residues long: tRNA dimethylallyltransferase (345 aa).

9–16 (GPTASGKS) is a binding site for ATP. A substrate-binding site is contributed by 11 to 16 (TASGKS). Interaction with substrate tRNA regions lie at residues 34–37 (DSMQ) and 195–199 (QRMIR).

The protein belongs to the IPP transferase family. Monomer. Mg(2+) serves as cofactor.

The catalysed reaction is adenosine(37) in tRNA + dimethylallyl diphosphate = N(6)-dimethylallyladenosine(37) in tRNA + diphosphate. In terms of biological role, catalyzes the transfer of a dimethylallyl group onto the adenine at position 37 in tRNAs that read codons beginning with uridine, leading to the formation of N6-(dimethylallyl)adenosine (i(6)A). The polypeptide is tRNA dimethylallyltransferase (Orientia tsutsugamushi (strain Ikeda) (Rickettsia tsutsugamushi)).